A 470-amino-acid chain; its full sequence is Neuraminidase (470 aa).

The Intravirion segment spans residues 1–6 (MNPNQK). The helical transmembrane segment at 7 to 27 (IITIGSASIVLTTIGLLLQIT) threads the bilayer. Residues 11–33 (GSASIVLTTIGLLLQITSLCSIW) form an involved in apical transport and lipid raft association region. Residues 28 to 470 (SLCSIWFSHY…GALLPFDIDK (443 aa)) lie on the Virion surface side of the membrane. Residues 36 to 88 (HYNQVTQPHEQACSNNTTNYYNETFVNVTNVQNNYTTIIEPSAPNVVHYSSGR) are hypervariable stalk region. Residues asparagine 50, asparagine 51, asparagine 57, asparagine 62, and asparagine 69 are each glycosylated (N-linked (GlcNAc...) asparagine; by host). Residues 90–470 (LCPVKGWAPL…GALLPFDIDK (381 aa)) are head of neuraminidase. Disulfide bonds link cysteine 91–cysteine 418, cysteine 123–cysteine 128, cysteine 183–cysteine 230, cysteine 232–cysteine 237, cysteine 278–cysteine 291, cysteine 280–cysteine 289, cysteine 317–cysteine 334, and cysteine 422–cysteine 447. Arginine 117 is a binding site for substrate. Asparagine 145 carries an N-linked (GlcNAc...) asparagine; by host glycan. The active-site Proton donor/acceptor is aspartate 150. Arginine 151 lines the substrate pocket. Asparagine 269 carries an N-linked (GlcNAc...) asparagine; by host glycan. 276 to 277 (EE) contacts substrate. Arginine 292 is a substrate binding site. Aspartate 293, glycine 297, and aspartate 323 together coordinate Ca(2+). Arginine 369 is a substrate binding site. N-linked (GlcNAc...) asparagine; by host glycosylation occurs at asparagine 399. Residue tyrosine 403 is the Nucleophile of the active site. N-linked (GlcNAc...) asparagine; by host glycosylation is present at asparagine 417.

Belongs to the glycosyl hydrolase 34 family. As to quaternary structure, homotetramer. It depends on Ca(2+) as a cofactor. In terms of processing, N-glycosylated.

It localises to the virion membrane. The protein localises to the host apical cell membrane. It carries out the reaction Hydrolysis of alpha-(2-&gt;3)-, alpha-(2-&gt;6)-, alpha-(2-&gt;8)- glycosidic linkages of terminal sialic acid residues in oligosaccharides, glycoproteins, glycolipids, colominic acid and synthetic substrates.. Its activity is regulated as follows. Inhibited by the neuraminidase inhibitors zanamivir (Relenza) and oseltamivir (Tamiflu). These drugs interfere with the release of progeny virus from infected cells and are effective against all influenza strains. Resistance to neuraminidase inhibitors is quite rare. Catalyzes the removal of terminal sialic acid residues from viral and cellular glycoconjugates. Cleaves off the terminal sialic acids on the glycosylated HA during virus budding to facilitate virus release. Additionally helps virus spread through the circulation by further removing sialic acids from the cell surface. These cleavages prevent self-aggregation and ensure the efficient spread of the progeny virus from cell to cell. Otherwise, infection would be limited to one round of replication. Described as a receptor-destroying enzyme because it cleaves a terminal sialic acid from the cellular receptors. May facilitate viral invasion of the upper airways by cleaving the sialic acid moieties on the mucin of the airway epithelial cells. Likely to plays a role in the budding process through its association with lipid rafts during intracellular transport. May additionally display a raft-association independent effect on budding. Plays a role in the determination of host range restriction on replication and virulence. Sialidase activity in late endosome/lysosome traffic seems to enhance virus replication. This is Neuraminidase from Influenza A virus (strain A/Turkey/Ontario/6118/1968 H8N4).